The following is a 192-amino-acid chain: Imidazoleglycerol-phosphate dehydratase (192 aa).

This sequence belongs to the imidazoleglycerol-phosphate dehydratase family.

The protein localises to the cytoplasm. It catalyses the reaction D-erythro-1-(imidazol-4-yl)glycerol 3-phosphate = 3-(imidazol-4-yl)-2-oxopropyl phosphate + H2O. It functions in the pathway amino-acid biosynthesis; L-histidine biosynthesis; L-histidine from 5-phospho-alpha-D-ribose 1-diphosphate: step 6/9. The chain is Imidazoleglycerol-phosphate dehydratase from Staphylococcus aureus (strain bovine RF122 / ET3-1).